Reading from the N-terminus, the 312-residue chain is Beta-ketoacyl-[acyl-carrier-protein] synthase III (312 aa).

Active-site residues include C112 and H237. The segment at 238–242 (QANIR) is ACP-binding. Residue N267 is part of the active site.

This sequence belongs to the thiolase-like superfamily. FabH family. As to quaternary structure, homodimer.

It is found in the cytoplasm. It catalyses the reaction malonyl-[ACP] + acetyl-CoA + H(+) = 3-oxobutanoyl-[ACP] + CO2 + CoA. It functions in the pathway lipid metabolism; fatty acid biosynthesis. In terms of biological role, catalyzes the condensation reaction of fatty acid synthesis by the addition to an acyl acceptor of two carbons from malonyl-ACP. Catalyzes the first condensation reaction which initiates fatty acid synthesis and may therefore play a role in governing the total rate of fatty acid production. Possesses both acetoacetyl-ACP synthase and acetyl transacylase activities. Its substrate specificity determines the biosynthesis of branched-chain and/or straight-chain of fatty acids. The protein is Beta-ketoacyl-[acyl-carrier-protein] synthase III of Bacillus pumilus (strain SAFR-032).